Reading from the N-terminus, the 144-residue chain is Large ribosomal subunit protein uL22 (144 aa).

Residues 1-38 (MAETQTTKKGAKRVRQPVPARRSKPNRPAKAAPGPHAS) are disordered. The segment covering 9 to 27 (KGAKRVRQPVPARRSKPNR) has biased composition (basic residues).

The protein belongs to the universal ribosomal protein uL22 family. In terms of assembly, part of the 50S ribosomal subunit.

In terms of biological role, this protein binds specifically to 23S rRNA; its binding is stimulated by other ribosomal proteins, e.g. L4, L17, and L20. It is important during the early stages of 50S assembly. It makes multiple contacts with different domains of the 23S rRNA in the assembled 50S subunit and ribosome. Its function is as follows. The globular domain of the protein is located near the polypeptide exit tunnel on the outside of the subunit, while an extended beta-hairpin is found that lines the wall of the exit tunnel in the center of the 70S ribosome. This chain is Large ribosomal subunit protein uL22, found in Anaeromyxobacter sp. (strain Fw109-5).